We begin with the raw amino-acid sequence, 453 residues long: Homogentisate 1,2-dioxygenase (453 aa).

The Proton acceptor role is filled by H304. Fe cation is bound by residues H347 and E353. Homogentisate-binding residues include Y362 and H383. H383 is a binding site for Fe cation.

This sequence belongs to the homogentisate dioxygenase family. In terms of assembly, hexamer; dimer of trimers. The cofactor is Fe cation.

It catalyses the reaction homogentisate + O2 = 4-maleylacetoacetate + H(+). The protein operates within amino-acid degradation; L-phenylalanine degradation; acetoacetate and fumarate from L-phenylalanine: step 4/6. In terms of biological role, involved in the catabolism of homogentisate (2,5-dihydroxyphenylacetate or 2,5-OH-PhAc), a central intermediate in the degradation of phenylalanine and tyrosine. Catalyzes the oxidative ring cleavage of the aromatic ring of homogentisate to yield maleylacetoacetate. This Sinorhizobium fredii (strain NBRC 101917 / NGR234) protein is Homogentisate 1,2-dioxygenase.